The chain runs to 320 residues: Malate dehydrogenase (320 aa).

NAD(+)-binding positions include 10–15 (GSGMIG) and Asp-34. Substrate-binding residues include Arg-83 and Arg-89. NAD(+)-binding positions include Asn-96 and 119–121 (ITN). Residues Asn-121 and Arg-152 each contribute to the substrate site. His-176 (proton acceptor) is an active-site residue.

This sequence belongs to the LDH/MDH superfamily. MDH type 3 family.

The catalysed reaction is (S)-malate + NAD(+) = oxaloacetate + NADH + H(+). Functionally, catalyzes the reversible oxidation of malate to oxaloacetate. The polypeptide is Malate dehydrogenase (Rhizobium rhizogenes (strain K84 / ATCC BAA-868) (Agrobacterium radiobacter)).